The sequence spans 344 residues: Ferredoxin--NADP reductase (344 aa).

7 residues coordinate FAD: aspartate 36, glutamine 44, tyrosine 49, valine 89, phenylalanine 127, aspartate 291, and threonine 332.

This sequence belongs to the ferredoxin--NADP reductase type 2 family. Homodimer. FAD serves as cofactor.

It carries out the reaction 2 reduced [2Fe-2S]-[ferredoxin] + NADP(+) + H(+) = 2 oxidized [2Fe-2S]-[ferredoxin] + NADPH. The sequence is that of Ferredoxin--NADP reductase from Beijerinckia indica subsp. indica (strain ATCC 9039 / DSM 1715 / NCIMB 8712).